The sequence spans 232 residues: Orotidine 5'-phosphate decarboxylase (232 aa).

Substrate-binding positions include Asp-11, Lys-33, 60–69 (DLKFHDIPTT), Thr-120, Arg-181, Gln-191, Gly-211, and Arg-212. Lys-62 acts as the Proton donor in catalysis.

It belongs to the OMP decarboxylase family. Type 1 subfamily. As to quaternary structure, homodimer.

It catalyses the reaction orotidine 5'-phosphate + H(+) = UMP + CO2. Its pathway is pyrimidine metabolism; UMP biosynthesis via de novo pathway; UMP from orotate: step 2/2. Functionally, catalyzes the decarboxylation of orotidine 5'-monophosphate (OMP) to uridine 5'-monophosphate (UMP). The sequence is that of Orotidine 5'-phosphate decarboxylase from Tolumonas auensis (strain DSM 9187 / NBRC 110442 / TA 4).